We begin with the raw amino-acid sequence, 293 residues long: Energy-coupling factor transporter ATP-binding protein EcfA2 (293 aa).

Residues 3–246 (ITFQKVEHRY…ADELEKIGVD (244 aa)) form the ABC transporter domain. 40–47 (GHTGSGKS) is an ATP binding site.

This sequence belongs to the ABC transporter superfamily. Energy-coupling factor EcfA family. As to quaternary structure, forms a stable energy-coupling factor (ECF) transporter complex composed of 2 membrane-embedded substrate-binding proteins (S component), 2 ATP-binding proteins (A component) and 2 transmembrane proteins (T component).

Its subcellular location is the cell membrane. ATP-binding (A) component of a common energy-coupling factor (ECF) ABC-transporter complex. Unlike classic ABC transporters this ECF transporter provides the energy necessary to transport a number of different substrates. The sequence is that of Energy-coupling factor transporter ATP-binding protein EcfA2 from Bacillus anthracis.